Consider the following 372-residue polypeptide: Alanine dehydrogenase 1 (372 aa).

Residue His-94 is part of the active site. 170–200 (TYVIFGGGVAATNAANVALGLNAKVIIIELN) contributes to the NAD(+) binding site.

It belongs to the AlaDH/PNT family.

It catalyses the reaction L-alanine + NAD(+) + H2O = pyruvate + NH4(+) + NADH + H(+). Its pathway is amino-acid degradation; L-alanine degradation via dehydrogenase pathway; NH(3) and pyruvate from L-alanine: step 1/1. In terms of biological role, may play a role in cell wall synthesis as L-alanine is an important constituent of the peptidoglycan layer. The polypeptide is Alanine dehydrogenase 1 (ald1) (Staphylococcus aureus (strain NCTC 8325 / PS 47)).